The primary structure comprises 473 residues: UDP-glycosyltransferase 71B1 (473 aa).

Catalysis depends on histidine 15, which acts as the Proton acceptor. Histidine 15 provides a ligand contact to an anthocyanidin. The active-site Charge relay is the aspartate 110. UDP-alpha-D-glucose contacts are provided by threonine 132, alanine 342, glutamine 344, histidine 359, tryptophan 362, asparagine 363, serine 364, and glutamate 367. Position 382 (alanine 382) interacts with an anthocyanidin. Residues glutamate 383 and glutamine 384 each contribute to the UDP-alpha-D-glucose site.

This sequence belongs to the UDP-glycosyltransferase family.

It carries out the reaction a flavonol + UDP-alpha-D-glucose = a flavonol 3-O-beta-D-glucoside + UDP + H(+). Functionally, possesses quercetin 3-O-glucosyltransferase activity in vitro. Also active in vitro on benzoates and benzoate derivatives. The sequence is that of UDP-glycosyltransferase 71B1 (UGT71B1) from Arabidopsis thaliana (Mouse-ear cress).